Reading from the N-terminus, the 198-residue chain is MIKSKFFCKSLKFFMHPYSKIKNEKSFIDLNFIKGYSNFIKKKCVPYDKKKYIFCNKNRLISNVGNKINKKESEEQYDSDDDNDKLVLNDDEDDEKKQVHINNKTEATNITNINKNIENIKNDMSNLNNMNDSNQKIKMKNKGKYDSDVIIMYDHFFQLPQNFLSSKLSEEEIEYINTGIYNPDFDNYINNIVMKKKK.

Residues 72-95 (ESEEQYDSDDDNDKLVLNDDEDDE) form a disordered region. Residues 75–94 (EQYDSDDDNDKLVLNDDEDD) are compositionally biased toward acidic residues. A coiled-coil region spans residues 106-136 (EATNITNINKNIENIKNDMSNLNNMNDSNQK).

This is an uncharacterized protein from Plasmodium falciparum (isolate 3D7).